Consider the following 169-residue polypeptide: Regulator of sigma D (169 aa).

This sequence belongs to the Rsd/AlgQ family. As to quaternary structure, interacts with RpoD.

Its subcellular location is the cytoplasm. In terms of biological role, binds RpoD and negatively regulates RpoD-mediated transcription activation by preventing the interaction between the primary sigma factor RpoD with the catalytic core of the RNA polymerase and with promoter DNA. May be involved in replacement of the RNA polymerase sigma subunit from RpoD to RpoS during the transition from exponential growth to the stationary phase. The polypeptide is Regulator of sigma D (Yersinia pestis).